The following is a 148-amino-acid chain: Lysozyme C, non-stomach isozyme (148 aa).

The signal sequence occupies residues 1 to 18 (MKALLILGLLLFSVAVQG). Residues 19–148 (KVFERCELAR…LTSYIQGCGV (130 aa)) form the C-type lysozyme domain. 4 cysteine pairs are disulfide-bonded: Cys24-Cys146, Cys48-Cys134, Cys83-Cys99, and Cys95-Cys113. Catalysis depends on residues Glu53 and Asp71.

The protein belongs to the glycosyl hydrolase 22 family. In terms of tissue distribution, expressed in blood cells.

The enzyme catalyses Hydrolysis of (1-&gt;4)-beta-linkages between N-acetylmuramic acid and N-acetyl-D-glucosamine residues in a peptidoglycan and between N-acetyl-D-glucosamine residues in chitodextrins.. In terms of biological role, lysozymes have primarily a bacteriolytic function; those in tissues and body fluids are associated with the monocyte-macrophage system and enhance the activity of immunoagents. The chain is Lysozyme C, non-stomach isozyme (LYS) from Bos taurus (Bovine).